We begin with the raw amino-acid sequence, 255 residues long: MDTVSLEHQIQSVQRHISFLKKEQMALLRDLHLEILRLQKRCSELTHDLEMREAQSHQQEAASRELESKCRALESQLEARAAANAELRREVAQREALVSALRCSLRTEERRFLEELRRRSHRATVLGTELQKHTEAAAYLSCQLHAARQRLQAPRPGPGATAEPRPRRRALRARRPPAAHEAAAKGPGRDWAAWDRGAGALDDADPMPDPALFLYARRPLRPSARSPRQPPPQEPPDRAGPQPAPSQPSAPGDPE.

The stretch at 28 to 90 (LRDLHLEILR…AAANAELRRE (63 aa)) forms a coiled coil. Residues 149–255 (QRLQAPRPGP…SQPSAPGDPE (107 aa)) are disordered. Positions 166 to 177 (PRRRALRARRPP) are enriched in basic residues. The segment covering 242–255 (QPAPSQPSAPGDPE) has biased composition (pro residues).

This is Coiled-coil domain-containing 92B from Homo sapiens (Human).